A 643-amino-acid polypeptide reads, in one-letter code: uncharacterized protein (643 aa).

A helical transmembrane segment spans residues 9–29 (IVLALLLLLLPVVCGDVSVYK).

It localises to the membrane. This is an uncharacterized protein from Methanocaldococcus jannaschii (strain ATCC 43067 / DSM 2661 / JAL-1 / JCM 10045 / NBRC 100440) (Methanococcus jannaschii).